The sequence spans 200 residues: Dephospho-CoA kinase (200 aa).

The DPCK domain maps to 2–200 (LIAVVGKAGV…CHHGHYQTPK (199 aa)). 10–15 (GVGKTT) serves as a coordination point for ATP.

It belongs to the CoaE family.

Its subcellular location is the cytoplasm. It carries out the reaction 3'-dephospho-CoA + ATP = ADP + CoA + H(+). The protein operates within cofactor biosynthesis; coenzyme A biosynthesis; CoA from (R)-pantothenate: step 5/5. Catalyzes the phosphorylation of the 3'-hydroxyl group of dephosphocoenzyme A to form coenzyme A. In Mycoplasma pneumoniae (strain ATCC 29342 / M129 / Subtype 1) (Mycoplasmoides pneumoniae), this protein is Dephospho-CoA kinase.